The sequence spans 322 residues: Olfactory receptor 5P2 (322 aa).

Residues 1–28 lie on the Extracellular side of the membrane; sequence MNSLKDGNHTALTGFILLGLTDDPILRV. Asparagine 8 is a glycosylation site (N-linked (GlcNAc...) asparagine). Residues 29–42 traverse the membrane as a helical segment; sequence ILFMIILSGNLSII. The Cytoplasmic portion of the chain corresponds to 43 to 50; it reads ILIRISSQ. Residues 51–71 traverse the membrane as a helical segment; sequence LHHPMYFFLSHLAFADMAYSS. The Extracellular segment spans residues 72–95; that stretch reads SVTPNMLVNFLVERNTVSYLGCAI. Cysteines 93 and 185 form a disulfide. A helical membrane pass occupies residues 96-116; the sequence is QLGSAAFFATVECVLLAAMAY. Over 117 to 135 the chain is Cytoplasmic; the sequence is DRFVAICSPLLYSTKMSTQ. Residues 136–156 traverse the membrane as a helical segment; that stretch reads VSVQLLLVVYIAGFLIAVSYT. At 157 to 192 the chain is on the extracellular side; it reads TSFYFLLFCGPNQVNHFFCDFAPLLELSCSDISVST. The helical transmembrane segment at 193-213 threads the bilayer; sequence VVLSFSSGSIIVVTVCVIAVC. Residues 214–233 are Cytoplasmic-facing; the sequence is YIYILITILKMRSTEGHHKA. A helical transmembrane segment spans residues 234-254; that stretch reads FSTCTSHLTVVTLFYGTITFI. The Extracellular portion of the chain corresponds to 255–267; sequence YVMPNFSYSTDQN. Asparagine 259 carries an N-linked (GlcNAc...) asparagine glycan. Residues 268–288 traverse the membrane as a helical segment; it reads KVVSVLYTVVIPMLNPLIYSL. Over 289-322 the chain is Cytoplasmic; sequence RNKEIKGALKRELVRKILSHDACYFSRTSNNDIT.

Belongs to the G-protein coupled receptor 1 family. As to expression, expressed in the tongue.

The protein localises to the cell membrane. Functionally, odorant receptor (Potential). May be involved in taste perception. The protein is Olfactory receptor 5P2 (OR5P2) of Homo sapiens (Human).